The chain runs to 148 residues: Multiprotein-bridging factor 1 (148 aa).

Positions 1 to 97 (MSDWDTVTKI…AKGWAQKDLS (97 aa)) are disordered. Positions 82–136 (IQKGRQAKGWAQKDLSQRINEKPQVVNDYESGRAIPNQQVLSKMERALGIKLRGQ) constitute an HTH cro/C1-type domain. Positions 93 to 112 (QKDLSQRINEKPQVVNDYES) form a DNA-binding region, H-T-H motif.

It belongs to the MBF1 family.

Transcriptional coactivator that stimulates GCN4-dependent transcriptional activity by bridging the DNA-binding region of GCN4 and TBP (SPT15), thereby recruiting TBP to GCN4-bound promoters. Involved in induction of the ribosome quality control (RQC) pathway; a pathway that degrades nascent peptide chains during problematic translation. Required to prevent stalled ribosomes from frameshifting. The protein is Multiprotein-bridging factor 1 (mbf1) of Schizosaccharomyces pombe (strain 972 / ATCC 24843) (Fission yeast).